The following is a 459-amino-acid chain: Chromosomal replication initiator protein DnaA (459 aa).

Residues 1–74 (MQKIETFWHF…DEMAQDHFNE (74 aa)) are domain I, interacts with DnaA modulators. A domain II region spans residues 74–122 (ERISFRLELREPAESEAQTVRTSAQKNREDKKPAAEKTQGVTSRKTNPS). Residues 87–122 (ESEAQTVRTSAQKNREDKKPAAEKTQGVTSRKTNPS) form a disordered region. Residues 89 to 98 (EAQTVRTSAQ) show a composition bias toward polar residues. A compositionally biased stretch (basic and acidic residues) spans 99-108 (KNREDKKPAA). Residues 112–122 (QGVTSRKTNPS) show a composition bias toward polar residues. Residues 123–339 (QLNASFTFDA…GALKRVLAFS (217 aa)) are domain III, AAA+ region. ATP-binding residues include Gly167, Gly169, Lys170, and Thr171. The interval 340–459 (RFTGHSISLD…FNALMHILRG (120 aa)) is domain IV, binds dsDNA.

This sequence belongs to the DnaA family. In terms of assembly, oligomerizes as a right-handed, spiral filament on DNA at oriC.

The protein localises to the cytoplasm. Functionally, plays an essential role in the initiation and regulation of chromosomal replication. ATP-DnaA binds to the origin of replication (oriC) to initiate formation of the DNA replication initiation complex once per cell cycle. Binds the DnaA box (a 9 base pair repeat at the origin) and separates the double-stranded (ds)DNA. Forms a right-handed helical filament on oriC DNA; dsDNA binds to the exterior of the filament while single-stranded (ss)DNA is stabiized in the filament's interior. The ATP-DnaA-oriC complex binds and stabilizes one strand of the AT-rich DNA unwinding element (DUE), permitting loading of DNA polymerase. After initiation quickly degrades to an ADP-DnaA complex that is not apt for DNA replication. Binds acidic phospholipids. In Nitrosomonas europaea (strain ATCC 19718 / CIP 103999 / KCTC 2705 / NBRC 14298), this protein is Chromosomal replication initiator protein DnaA.